The following is a 246-amino-acid chain: Isoamyl acetate-hydrolyzing esterase (246 aa).

Ser-46 serves as the catalytic Nucleophile. Asp-201 functions as the Proton donor in the catalytic mechanism. His-204 serves as the catalytic Proton acceptor.

The protein belongs to the 'GDSL' lipolytic enzyme family. IAH1 subfamily.

It is found in the cytoplasm. It catalyses the reaction 3-methylbutyl acetate + H2O = 3-methylbutanol + acetate + H(+). The protein is Isoamyl acetate-hydrolyzing esterase (iah1) of Schizosaccharomyces pombe (strain 972 / ATCC 24843) (Fission yeast).